We begin with the raw amino-acid sequence, 310 residues long: Cysteine synthase (310 aa).

Lys46 bears the N6-(pyridoxal phosphate)lysine mark. Pyridoxal 5'-phosphate contacts are provided by residues Asn76, 180–184 (GTGGT), and Ser268.

The protein belongs to the cysteine synthase/cystathionine beta-synthase family. As to quaternary structure, homodimer. The cofactor is pyridoxal 5'-phosphate.

The enzyme catalyses O-acetyl-L-serine + hydrogen sulfide = L-cysteine + acetate. It participates in amino-acid biosynthesis; L-cysteine biosynthesis; L-cysteine from L-serine: step 2/2. The polypeptide is Cysteine synthase (cysK) (Staphylococcus epidermidis (strain ATCC 35984 / DSM 28319 / BCRC 17069 / CCUG 31568 / BM 3577 / RP62A)).